A 345-amino-acid chain; its full sequence is Phosphoribosylformylglycinamidine cyclo-ligase (345 aa).

The protein belongs to the AIR synthase family.

The protein localises to the cytoplasm. It carries out the reaction 2-formamido-N(1)-(5-O-phospho-beta-D-ribosyl)acetamidine + ATP = 5-amino-1-(5-phospho-beta-D-ribosyl)imidazole + ADP + phosphate + H(+). Its pathway is purine metabolism; IMP biosynthesis via de novo pathway; 5-amino-1-(5-phospho-D-ribosyl)imidazole from N(2)-formyl-N(1)-(5-phospho-D-ribosyl)glycinamide: step 2/2. This Histophilus somni (strain 129Pt) (Haemophilus somnus) protein is Phosphoribosylformylglycinamidine cyclo-ligase.